We begin with the raw amino-acid sequence, 230 residues long: UPF0494 membrane protein C1348.07 (230 aa).

The next 3 membrane-spanning stretches (helical) occupy residues 78-98, 120-140, and 148-168; these read WPLL…NFEV, IWGP…GLIY, and AIPL…VAMV.

This sequence belongs to the UPF0494 family.

The protein resides in the vacuole. It localises to the membrane. This is UPF0494 membrane protein C1348.07 from Schizosaccharomyces pombe (strain 972 / ATCC 24843) (Fission yeast).